Reading from the N-terminus, the 263-residue chain is Probable elongation factor 1-beta/1-delta 2 (263 aa).

An N-acetylserine modification is found at Ser2. Positions Gln112–Lys153 are disordered. The segment covering Ala133–Glu150 has biased composition (acidic residues).

This sequence belongs to the EF-1-beta/EF-1-delta family. In terms of assembly, EF-1 is composed of 4 subunits: alpha, beta, delta, and gamma.

Its function is as follows. EF-1-beta and EF-1-delta stimulate the exchange of GDP bound to EF-1-alpha to GTP. In Caenorhabditis elegans, this protein is Probable elongation factor 1-beta/1-delta 2.